The following is a 425-amino-acid chain: Dihydroorotase (425 aa).

Zn(2+) contacts are provided by His61 and His63. Substrate contacts are provided by residues 63–65 (HLR) and Asn95. The Zn(2+) site is built by Asp153, His180, and His233. Residue Asn279 participates in substrate binding. Asp306 provides a ligand contact to Zn(2+). Residue Asp306 is part of the active site. Residue His310 coordinates substrate.

Belongs to the metallo-dependent hydrolases superfamily. DHOase family. Class I DHOase subfamily. Requires Zn(2+) as cofactor.

It carries out the reaction (S)-dihydroorotate + H2O = N-carbamoyl-L-aspartate + H(+). The protein operates within pyrimidine metabolism; UMP biosynthesis via de novo pathway; (S)-dihydroorotate from bicarbonate: step 3/3. Catalyzes the reversible cyclization of carbamoyl aspartate to dihydroorotate. This Trichlorobacter lovleyi (strain ATCC BAA-1151 / DSM 17278 / SZ) (Geobacter lovleyi) protein is Dihydroorotase.